The primary structure comprises 446 residues: Putative diacyglycerol O-acyltransferase MT3481 (446 aa).

H129 (proton acceptor) is an active-site residue. The segment at 425–446 (SRALPSAARRGRPSVPTARARH) is disordered.

Belongs to the long-chain O-acyltransferase family.

The enzyme catalyses an acyl-CoA + a 1,2-diacyl-sn-glycerol = a triacyl-sn-glycerol + CoA. It participates in glycerolipid metabolism; triacylglycerol biosynthesis. The protein is Putative diacyglycerol O-acyltransferase MT3481 of Mycobacterium tuberculosis (strain CDC 1551 / Oshkosh).